The primary structure comprises 215 residues: LexA repressor (215 aa).

A DNA-binding region (H-T-H motif) is located at residues 28–48; the sequence is RAEIAAELGFSSPNAAEEHLR. Residues serine 133 and lysine 170 each act as for autocatalytic cleavage activity in the active site.

The protein belongs to the peptidase S24 family. Homodimer.

The catalysed reaction is Hydrolysis of Ala-|-Gly bond in repressor LexA.. Represses a number of genes involved in the response to DNA damage (SOS response), including recA and lexA. In the presence of single-stranded DNA, RecA interacts with LexA causing an autocatalytic cleavage which disrupts the DNA-binding part of LexA, leading to derepression of the SOS regulon and eventually DNA repair. In Burkholderia thailandensis (strain ATCC 700388 / DSM 13276 / CCUG 48851 / CIP 106301 / E264), this protein is LexA repressor.